Consider the following 295-residue polypeptide: Glycine N-acyltransferase-like protein Keg1 (295 aa).

Lysine 41 carries the post-translational modification N6-acetyllysine; alternate. Lysine 41 carries the N6-succinyllysine; alternate modification. Residue lysine 43 is modified to N6-acetyllysine. The residue at position 48 (lysine 48) is an N6-acetyllysine; alternate. N6-succinyllysine; alternate is present on lysine 48. 2 positions are modified to N6-acetyllysine: lysine 80 and lysine 83. Lysine 124, lysine 128, and lysine 140 each carry N6-acetyllysine; alternate. Residues lysine 124, lysine 128, and lysine 140 each carry the N6-succinyllysine; alternate modification. Residue lysine 150 is modified to N6-acetyllysine. N6-acetyllysine; alternate is present on lysine 255. At lysine 255 the chain carries N6-succinyllysine; alternate.

The protein belongs to the glycine N-acyltransferase family. As to quaternary structure, binds to microtubules. As to expression, specifically expressed in kidney and liver. Up-regulated in the regenerating liver as well as in hepatocellular carcinoma.

Its subcellular location is the cytoplasm. The protein resides in the cytoskeleton. It localises to the microtubule organizing center. It is found in the centrosome. The enzyme catalyses an acyl-CoA + glycine = an N-acylglycine + CoA + H(+). In terms of biological role, acyltransferase which transfers the acyl group to the N-terminus of glycine. Can conjugate a multitude of substrates to form a variety of N-acylglycines. This is Glycine N-acyltransferase-like protein Keg1 (Keg1) from Rattus norvegicus (Rat).